We begin with the raw amino-acid sequence, 638 residues long: Plasma kallikrein (638 aa).

A signal peptide spans Met1–Cys19. 4 Apple domains span residues Cys21–Cys104, Cys111–Cys194, Cys201–Cys284, and Cys292–Cys375. Cystine bridges form between Cys21/Cys104, Cys47/Cys77, Cys51/Cys57, Cys111/Cys194, Cys137/Cys166, Cys141/Cys147, Cys201/Cys284, Cys227/Cys256, Cys231/Cys237, Cys292/Cys375, Cys318/Cys347, Cys322/Cys328, Cys340/Cys345, Cys383/Cys503, Cys419/Cys435, Cys517/Cys584, Cys548/Cys563, and Cys574/Cys602. Asn127 carries N-linked (GlcNAc...) asparagine glycosylation. Asn308 carries an N-linked (GlcNAc...) asparagine glycan. The Peptidase S1 domain maps to Ile391 to Gln626. N-linked (GlcNAc...) asparagine glycosylation is present at Asn396. The active-site Charge relay system is His434. The N-linked (GlcNAc...) asparagine glycan is linked to Asn453. Asp483 functions as the Charge relay system in the catalytic mechanism. Asn494 is a glycosylation site (N-linked (GlcNAc...) asparagine). Ser578 (charge relay system) is an active-site residue.

This sequence belongs to the peptidase S1 family. Plasma kallikrein subfamily. In terms of assembly, forms a heterodimer with SERPINA5. The zymogen is activated by factor XIIa, which cleaves the molecule into a light chain, which contains the active site, and a heavy chain, which associates with HMW kininogen. These chains are linked by one or more disulfide bonds. Interacts with iripin-3, a serine protease inhibitor from Ixodes ricinus saliva. Interacts with iripin-1, a serine protease inhibitor from Ixodes ricinus saliva. Found in plasma (at protein level).

Its subcellular location is the secreted. It carries out the reaction Cleaves selectively Arg-|-Xaa and Lys-|-Xaa bonds, including Lys-|-Arg and Arg-|-Ser bonds in (human) kininogen to release bradykinin.. Inhibited by SERPINA5. Participates in the surface-dependent activation of blood coagulation. Activates, in a reciprocal reaction, coagulation factor XII/F12 after binding to negatively charged surfaces. Releases bradykinin from HMW kininogen and may also play a role in the renin-angiotensin system by converting prorenin into renin. The polypeptide is Plasma kallikrein (KLKB1) (Homo sapiens (Human)).